The primary structure comprises 330 residues: uncharacterized protein (330 aa).

The protein belongs to the ornithine cyclodeaminase/mu-crystallin family.

It is found in the cytoplasm. This is an uncharacterized protein from Schizosaccharomyces pombe (strain 972 / ATCC 24843) (Fission yeast).